A 671-amino-acid chain; its full sequence is DNA ligase (671 aa).

Residues 32–36, 81–82, and Glu113 contribute to the NAD(+) site; these read DAEYD and SL. The active-site N6-AMP-lysine intermediate is the Lys115. Arg136, Glu173, Lys290, and Lys314 together coordinate NAD(+). Zn(2+) is bound by residues Cys408, Cys411, Cys426, and Cys432. A BRCT domain is found at 593–671; it reads EIDSPFAGKT…EAEMMRLLGE (79 aa).

This sequence belongs to the NAD-dependent DNA ligase family. LigA subfamily. Requires Mg(2+) as cofactor. It depends on Mn(2+) as a cofactor.

The enzyme catalyses NAD(+) + (deoxyribonucleotide)n-3'-hydroxyl + 5'-phospho-(deoxyribonucleotide)m = (deoxyribonucleotide)n+m + AMP + beta-nicotinamide D-nucleotide.. DNA ligase that catalyzes the formation of phosphodiester linkages between 5'-phosphoryl and 3'-hydroxyl groups in double-stranded DNA using NAD as a coenzyme and as the energy source for the reaction. It is essential for DNA replication and repair of damaged DNA. The polypeptide is DNA ligase (Klebsiella pneumoniae subsp. pneumoniae (strain ATCC 700721 / MGH 78578)).